A 275-amino-acid chain; its full sequence is Polyamine aminopropyltransferase (275 aa).

Positions 2 to 235 (ELWFTEKQTK…GLWTFTIGSK (234 aa)) constitute a PABS domain. Position 31 (Q31) interacts with S-methyl-5'-thioadenosine. Spermidine contacts are provided by H62 and D86. S-methyl-5'-thioadenosine-binding positions include E106 and 137-138 (DG). D155 acts as the Proton acceptor in catalysis. 155–158 (DSTE) provides a ligand contact to spermidine. P162 is an S-methyl-5'-thioadenosine binding site.

It belongs to the spermidine/spermine synthase family. Homodimer or homotetramer.

It is found in the cytoplasm. The catalysed reaction is S-adenosyl 3-(methylsulfanyl)propylamine + putrescine = S-methyl-5'-thioadenosine + spermidine + H(+). Its pathway is amine and polyamine biosynthesis; spermidine biosynthesis; spermidine from putrescine: step 1/1. Functionally, catalyzes the irreversible transfer of a propylamine group from the amino donor S-adenosylmethioninamine (decarboxy-AdoMet) to putrescine (1,4-diaminobutane) to yield spermidine. This is Polyamine aminopropyltransferase from Bacillus cytotoxicus (strain DSM 22905 / CIP 110041 / 391-98 / NVH 391-98).